Here is a 137-residue protein sequence, read N- to C-terminus: MLQPKRTKYRKQMKGRNRGLALRGSKISFGEFGLKAVERGRLTARQIEAARRAMTRHIKRGGKIWIRVFPDKPITQKPLEVRQGKGKGSVEYWVAQIQPGKVLFEMEGVSKELAMEAFDLAKAKLPFKVMFEERTVM.

It belongs to the universal ribosomal protein uL16 family. Part of the 50S ribosomal subunit.

In terms of biological role, binds 23S rRNA and is also seen to make contacts with the A and possibly P site tRNAs. The chain is Large ribosomal subunit protein uL16 from Legionella pneumophila (strain Paris).